We begin with the raw amino-acid sequence, 162 residues long: Interleukin-15 (162 aa).

The N-terminal stretch at 1–29 is a signal peptide; the sequence is MRISKPHLRSVSIQCYLCLLLNSHFLTEA. Positions 30 to 48 are excised as a propeptide; the sequence is GIHVFILGCFSAGLPKTEA. Cystine bridges form between cysteine 83–cysteine 133 and cysteine 90–cysteine 136. Residue asparagine 127 is glycosylated (N-linked (GlcNAc...) asparagine).

Belongs to the IL-15/IL-21 family.

The protein resides in the secreted. Its function is as follows. Cytokine that plays a major role in the development of inflammatory and protective immune responses to microbial invaders and parasites by modulating immune cells of both the innate and adaptive immune systems. Stimulates the proliferation of natural killer cells, T-cells and B-cells and promotes the secretion of several cytokines. In monocytes, induces the production of IL8 and monocyte chemotactic protein 1/CCL2, two chemokines that attract neutrophils and monocytes respectively to sites of infection. Unlike most cytokines, which are secreted in soluble form, IL15 is expressed in association with its high affinity IL15RA on the surface of IL15-producing cells and delivers signals to target cells that express IL2RB and IL2RG receptor subunits. Binding to its receptor triggers the phosphorylation of JAK1 and JAK3 and the recruitment and subsequent phosphorylation of signal transducer and activator of transcription-3/STAT3 and STAT5. In mast cells, induces the rapid tyrosine phosphorylation of STAT6 and thereby controls mast cell survival and release of cytokines such as IL4. This is Interleukin-15 (IL15) from Macaca thibetana (Pere David's macaque).